The sequence spans 388 residues: Quinolone resistance protein NorA (388 aa).

12 helical membrane-spanning segments follow: residues 5–25 (IFVL…VIPV), 42–62 (LLVA…GTLA), 69–89 (LIIC…AVGH), 99–119 (VIGG…IADI), 129–149 (FGYM…IGGF), 157–177 (MPFY…IVLI), 201–221 (WKVF…LSAF), 239–259 (DISI…IYFF), 269–289 (LTFI…LVFA), 293–313 (WSIM…RPAI), 331–351 (LNST…GALF), and 355–375 (IEAP…IVLI).

Belongs to the major facilitator superfamily. TCR/Tet family.

It localises to the cell membrane. Involved in quinolone resistance. May constitute a membrane-associated active efflux pump of hydrophilic quinolones. The sequence is that of Quinolone resistance protein NorA (norA) from Staphylococcus aureus (strain Mu50 / ATCC 700699).